Reading from the N-terminus, the 557-residue chain is Arginine--tRNA ligase (557 aa).

A 'HIGH' region motif is present at residues Ala-132 to His-142.

The protein belongs to the class-I aminoacyl-tRNA synthetase family. Monomer.

The protein localises to the cytoplasm. It carries out the reaction tRNA(Arg) + L-arginine + ATP = L-arginyl-tRNA(Arg) + AMP + diphosphate. The chain is Arginine--tRNA ligase from Geobacillus kaustophilus (strain HTA426).